The primary structure comprises 526 residues: tRNA-2-methylthio-N(6)-dimethylallyladenosine synthase (526 aa).

The disordered stretch occupies residues 1–24; it reads MTQQLNHAKVNQHPGQATLPETAE. Residues 28-144 enclose the MTTase N-terminal domain; it reads RTYEVKTYGC…LPTLLQRAEH (117 aa). Positions 37, 73, 107, 181, 185, and 188 each coordinate [4Fe-4S] cluster. Positions 167-403 constitute a Radical SAM core domain; that stretch reads RESAYAGWVS…MVVQEQVCEE (237 aa). A TRAM domain is found at 406–477; it reads QKLIGTTVEL…PFFLIADSGV (72 aa).

This sequence belongs to the methylthiotransferase family. MiaB subfamily. Monomer. Requires [4Fe-4S] cluster as cofactor.

The protein resides in the cytoplasm. The catalysed reaction is N(6)-dimethylallyladenosine(37) in tRNA + (sulfur carrier)-SH + AH2 + 2 S-adenosyl-L-methionine = 2-methylsulfanyl-N(6)-dimethylallyladenosine(37) in tRNA + (sulfur carrier)-H + 5'-deoxyadenosine + L-methionine + A + S-adenosyl-L-homocysteine + 2 H(+). Catalyzes the methylthiolation of N6-(dimethylallyl)adenosine (i(6)A), leading to the formation of 2-methylthio-N6-(dimethylallyl)adenosine (ms(2)i(6)A) at position 37 in tRNAs that read codons beginning with uridine. The protein is tRNA-2-methylthio-N(6)-dimethylallyladenosine synthase of Corynebacterium glutamicum (strain R).